The primary structure comprises 58 residues: Ribulose bisphosphate carboxylase large chain (58 aa).

The propeptide occupies 1 to 2 (MS). Pro3 is modified (N-acetylproline). Lys14 carries the N6,N6,N6-trimethyllysine modification.

Belongs to the RuBisCO large chain family. Type I subfamily. In terms of assembly, heterohexadecamer of 8 large chains and 8 small chains.

It is found in the plastid. Its subcellular location is the chloroplast. The catalysed reaction is 2 (2R)-3-phosphoglycerate + 2 H(+) = D-ribulose 1,5-bisphosphate + CO2 + H2O. It carries out the reaction D-ribulose 1,5-bisphosphate + O2 = 2-phosphoglycolate + (2R)-3-phosphoglycerate + 2 H(+). In terms of biological role, ruBisCO catalyzes two reactions: the carboxylation of D-ribulose 1,5-bisphosphate, the primary event in carbon dioxide fixation, as well as the oxidative fragmentation of the pentose substrate in the photorespiration process. Both reactions occur simultaneously and in competition at the same active site. The chain is Ribulose bisphosphate carboxylase large chain (rbcL) from Euonymus maackii (Maack's spindle tree).